We begin with the raw amino-acid sequence, 1019 residues long: UPF0182 protein Tery_0938 (1019 aa).

9 consecutive transmembrane segments (helical) span residues 23–43, 67–87, 128–148, 192–212, 213–233, 270–290, 313–333, 355–375, and 416–436; these read IHIL…GFST, TETW…LVNL, LSLS…GLIL, LWLL…PILW, LSVF…SHWA, FWLI…YLLS, LGGG…FELL, YVFL…QAIF, and AILT…PKIV.

This sequence belongs to the UPF0182 family.

The protein resides in the cell membrane. The sequence is that of UPF0182 protein Tery_0938 from Trichodesmium erythraeum (strain IMS101).